A 359-amino-acid polypeptide reads, in one-letter code: tRNA N6-adenosine threonylcarbamoyltransferase (359 aa).

2 residues coordinate Fe cation: H115 and H119. Substrate contacts are provided by residues 137–141, D170, G183, and N283; that span reads LVSGG. Residue D311 coordinates Fe cation. The disordered stretch occupies residues 328-359; sequence APDSLDLAPRSRWPLDEKSAPLIGTGRRGAKA.

It belongs to the KAE1 / TsaD family. Requires Fe(2+) as cofactor.

The protein resides in the cytoplasm. It catalyses the reaction L-threonylcarbamoyladenylate + adenosine(37) in tRNA = N(6)-L-threonylcarbamoyladenosine(37) in tRNA + AMP + H(+). Required for the formation of a threonylcarbamoyl group on adenosine at position 37 (t(6)A37) in tRNAs that read codons beginning with adenine. Is involved in the transfer of the threonylcarbamoyl moiety of threonylcarbamoyl-AMP (TC-AMP) to the N6 group of A37, together with TsaE and TsaB. TsaD likely plays a direct catalytic role in this reaction. In Brucella anthropi (strain ATCC 49188 / DSM 6882 / CCUG 24695 / JCM 21032 / LMG 3331 / NBRC 15819 / NCTC 12168 / Alc 37) (Ochrobactrum anthropi), this protein is tRNA N6-adenosine threonylcarbamoyltransferase.